Consider the following 609-residue polypeptide: Altered inheritance of mitochondria protein 9, mitochondrial (609 aa).

Residues M1–R24 constitute a mitochondrion transit peptide.

Belongs to the AIM9 family.

It is found in the mitochondrion. The sequence is that of Altered inheritance of mitochondria protein 9, mitochondrial (AIM9) from Meyerozyma guilliermondii (strain ATCC 6260 / CBS 566 / DSM 6381 / JCM 1539 / NBRC 10279 / NRRL Y-324) (Yeast).